The sequence spans 134 residues: Ribosome-binding factor A (134 aa).

It belongs to the RbfA family. As to quaternary structure, monomer. Binds 30S ribosomal subunits, but not 50S ribosomal subunits or 70S ribosomes.

The protein resides in the cytoplasm. In terms of biological role, one of several proteins that assist in the late maturation steps of the functional core of the 30S ribosomal subunit. Associates with free 30S ribosomal subunits (but not with 30S subunits that are part of 70S ribosomes or polysomes). Required for efficient processing of 16S rRNA. May interact with the 5'-terminal helix region of 16S rRNA. This is Ribosome-binding factor A from Psychrobacter arcticus (strain DSM 17307 / VKM B-2377 / 273-4).